The following is a 469-amino-acid chain: Probable monogalactosyldiacylglycerol synthase 2, chloroplastic (469 aa).

Residues 1–42 constitute a chloroplast transit peptide; sequence MVISVATPRRSIRDAVLGGVLGAGGRQLYQPLRCAFYDGAAG.

This sequence belongs to the glycosyltransferase 28 family.

The protein localises to the plastid. The protein resides in the chloroplast membrane. The catalysed reaction is a 1,2-diacyl-sn-glycerol + UDP-alpha-D-galactose = a 1,2-diacyl-3-O-(beta-D-galactosyl)-sn-glycerol + UDP + H(+). Involved in the synthesis of the major structural component of photosynthetic membranes. This chain is Probable monogalactosyldiacylglycerol synthase 2, chloroplastic (MGD2), found in Oryza sativa subsp. indica (Rice).